A 356-amino-acid polypeptide reads, in one-letter code: S-adenosylmethionine:tRNA ribosyltransferase-isomerase (356 aa).

It belongs to the QueA family. As to quaternary structure, monomer.

Its subcellular location is the cytoplasm. The catalysed reaction is 7-aminomethyl-7-carbaguanosine(34) in tRNA + S-adenosyl-L-methionine = epoxyqueuosine(34) in tRNA + adenine + L-methionine + 2 H(+). It participates in tRNA modification; tRNA-queuosine biosynthesis. In terms of biological role, transfers and isomerizes the ribose moiety from AdoMet to the 7-aminomethyl group of 7-deazaguanine (preQ1-tRNA) to give epoxyqueuosine (oQ-tRNA). This is S-adenosylmethionine:tRNA ribosyltransferase-isomerase from Shigella dysenteriae serotype 1 (strain Sd197).